Consider the following 250-residue polypeptide: ATP synthase subunit a (250 aa).

6 consecutive transmembrane segments (helical) span residues 26–46 (FTNA…FLYL), 84–104 (FFPM…LGMF), 114–134 (IIVT…YGFY), 143–163 (LFVP…IEVI), 193–213 (FVAS…LPLI), and 216–236 (VALT…FAVL).

It belongs to the ATPase A chain family. F-type ATPases have 2 components, CF(1) - the catalytic core - and CF(0) - the membrane proton channel. CF(1) has five subunits: alpha(3), beta(3), gamma(1), delta(1), epsilon(1). CF(0) has three main subunits: a(1), b(2) and c(9-12). The alpha and beta chains form an alternating ring which encloses part of the gamma chain. CF(1) is attached to CF(0) by a central stalk formed by the gamma and epsilon chains, while a peripheral stalk is formed by the delta and b chains.

The protein localises to the cell inner membrane. In terms of biological role, key component of the proton channel; it plays a direct role in the translocation of protons across the membrane. In Sinorhizobium fredii (strain NBRC 101917 / NGR234), this protein is ATP synthase subunit a.